Consider the following 598-residue polypeptide: Glutamine--fructose-6-phosphate aminotransferase [isomerizing] (598 aa).

Residue Cys2 is the Nucleophile; for GATase activity of the active site. In terms of domain architecture, Glutamine amidotransferase type-2 spans 2 to 218 (CGIVGYIGNN…DLSLGYASKD (217 aa)). SIS domains follow at residues 277-421 (VFDE…KRNL) and 450-588 (LSKR…VDMP). The active-site For Fru-6P isomerization activity is the Lys593.

In terms of assembly, homodimer.

Its subcellular location is the cytoplasm. The enzyme catalyses D-fructose 6-phosphate + L-glutamine = D-glucosamine 6-phosphate + L-glutamate. Catalyzes the first step in hexosamine metabolism, converting fructose-6P into glucosamine-6P using glutamine as a nitrogen source. The protein is Glutamine--fructose-6-phosphate aminotransferase [isomerizing] of Campylobacter jejuni subsp. jejuni serotype O:2 (strain ATCC 700819 / NCTC 11168).